A 481-amino-acid chain; its full sequence is MSAQVATVGKITQVLGPVIDVEFPPGGLPEVYTALKVTNTSISAEADNLTIEVAQHLGENMVRCISMDSTEGLARGQAVKNTGAPIQVPVGQGTLGRILNVIGEPVDERGPITSSQTWPIHRPAPTFVDQDVRVQAFETGIKVIDLLGPYTRGGKIGLFGGAGVGKTVLLMELIVNVAKERGGFSVFAGVGERTREGNDLYHEMQEGNVSTPRTWMESQCVLVYGQMNEPPGARARVALSALTIAEYFRDMEGHDVLLFVDNIFRFTQAGSEVSALLGRIPSAVGYQPTLSTEMGALQERITSTTKGSVTSVQAIYVPADDLTDPAPATTFAHLDATTVLNRAISELGIYPAVDPLDSTSRILDPNVVGPEHYAVARKVQGILQKYKELQDIIAILGMDELSETDKLTVARARKIQKFLSQPFHVAEVFTGAPGRYVELKDTIQGFKELAEGKHDDLPEAAFYMVGNINEAIEKARKLAAA.

An ATP-binding site is contributed by 160 to 167 (GGAGVGKT).

This sequence belongs to the ATPase alpha/beta chains family. F-type ATPases have 2 components, CF(1) - the catalytic core - and CF(0) - the membrane proton channel. CF(1) has five subunits: alpha(3), beta(3), gamma(1), delta(1), epsilon(1). CF(0) has three main subunits: a(1), b(2) and c(9-12). The alpha and beta chains form an alternating ring which encloses part of the gamma chain. CF(1) is attached to CF(0) by a central stalk formed by the gamma and epsilon chains, while a peripheral stalk is formed by the delta and b chains.

The protein resides in the cell inner membrane. It catalyses the reaction ATP + H2O + 4 H(+)(in) = ADP + phosphate + 5 H(+)(out). Its function is as follows. Produces ATP from ADP in the presence of a proton gradient across the membrane. The catalytic sites are hosted primarily by the beta subunits. This chain is ATP synthase subunit beta, found in Stigmatella aurantiaca.